Consider the following 407-residue polypeptide: Putative F-box protein At5g60560 (407 aa).

One can recognise an F-box domain in the interval 2–49 (TMMSDLSEDLVEEILCRVSITSLGAVRSTCKGWYVLSKTRVLCKAETK).

The polypeptide is Putative F-box protein At5g60560 (Arabidopsis thaliana (Mouse-ear cress)).